Consider the following 484-residue polypeptide: HSPB1-associated protein 1 (484 aa).

The interval 1–26 (MAARPGAITNADSASGGGEEEGKHVK) is disordered. The interval 88–208 (ETACNYVEAT…EDTPFLYPTR (121 aa)) is interaction with HSPB1. The region spanning 124–288 (WAYADYKYFV…HQTRVEEAIT (165 aa)) is the JmjC domain. The segment at 396–429 (TPSSEEPSSERGGIFENDGEDFVSKNGKSFGKRQ) is disordered.

Interacts with CRYAB and HSPB1.

It localises to the cytoplasm. Functionally, may play a role in cellular stress response. The sequence is that of HSPB1-associated protein 1 (HSPBAP1) from Bos taurus (Bovine).